Reading from the N-terminus, the 157-residue chain is Holo-[acyl-carrier-protein] synthase (157 aa).

Mg(2+) contacts are provided by aspartate 8 and glutamate 59.

This sequence belongs to the P-Pant transferase superfamily. AcpS family. The cofactor is Mg(2+).

The protein resides in the cytoplasm. It carries out the reaction apo-[ACP] + CoA = holo-[ACP] + adenosine 3',5'-bisphosphate + H(+). Its function is as follows. Transfers the 4'-phosphopantetheine moiety from coenzyme A to a Ser of acyl-carrier-protein. The polypeptide is Holo-[acyl-carrier-protein] synthase (Gluconobacter oxydans (strain 621H) (Gluconobacter suboxydans)).